We begin with the raw amino-acid sequence, 372 residues long: Bifunctional coenzyme PQQ synthesis protein C/D (372 aa).

The interval methionine 1 to serine 267 is pqqC. Residues glutamate 260 to aspartate 288 are disordered. Residues alanine 264–alanine 283 are compositionally biased toward low complexity. A linker region spans residues proline 268–glutamate 280. The interval proline 281–arginine 372 is pqqD.

The protein in the N-terminal section; belongs to the PqqC family. This sequence in the C-terminal section; belongs to the PqqD family. Monomer. Interacts with PqqE.

The catalysed reaction is 6-(2-amino-2-carboxyethyl)-7,8-dioxo-1,2,3,4,7,8-hexahydroquinoline-2,4-dicarboxylate + 3 O2 = pyrroloquinoline quinone + 2 H2O2 + 2 H2O + H(+). The protein operates within cofactor biosynthesis; pyrroloquinoline quinone biosynthesis. The PqqC region is involved in ring cyclization and eight-electron oxidation of 3a-(2-amino-2-carboxyethyl)-4,5-dioxo-4,5,6,7,8,9-hexahydroquinoline-7,9-dicarboxylic-acid to PQQ. In terms of biological role, the PqqD region functions as a PqqA binding domain and presents PqqA to PqqE. In Methylorubrum extorquens (strain ATCC 14718 / DSM 1338 / JCM 2805 / NCIMB 9133 / AM1) (Methylobacterium extorquens), this protein is Bifunctional coenzyme PQQ synthesis protein C/D (pqqCD).